A 27-amino-acid chain; its full sequence is U18-ctenitoxin-Co1a (27 aa).

It belongs to the u18-CNTX family. Expressed by the venom gland.

It localises to the secreted. Functionally, not toxic to mice by intracerebroventricular injection. In Ctenus ornatus (Brazilian spider), this protein is U18-ctenitoxin-Co1a.